Reading from the N-terminus, the 728-residue chain is Protein Hook homolog 1 (728 aa).

The residue at position 1 (methionine 1) is an N-acetylmethionine. The sufficient for interaction with microtubules stretch occupies residues 1–555 (MEETQPPPQP…LKQKLEAHME (555 aa)). The region spanning 12-128 (LPLCDSLMIW…RLLQLILGCA (117 aa)) is the Calponin-homology (CH) domain. 2 coiled-coil regions span residues 169 to 434 (PNDA…RCSQ) and 477 to 658 (LRLQ…AKFR). Residues 169–444 (PNDAVGELEQ…VQQDHLNQTD (276 aa)) are sufficient for homodimerization, interaction wit HOOK2, HOOK3 and AP4M1. Serine 235 is modified (phosphoserine). Residues 481 to 512 (QEGSENERIEELQEQLEQKHRKMNELETEQRL) form a disordered region. Residues 503–512 (MNELETEQRL) are compositionally biased toward basic and acidic residues. The tract at residues 657 to 728 (FRDYEEKLIV…SVKVPATTSD (72 aa)) is sufficient for interaction with AKTIP and VPS18. Threonine 699 bears the Phosphothreonine mark. Phosphoserine occurs at positions 719 and 727.

This sequence belongs to the hook family. In terms of assembly, self-associates. Component of the FTS/Hook/FHIP complex (FHF complex), composed of AKTIP/FTS, FHIP1B, and one or more members of the Hook family of proteins HOOK1, HOOK2, and HOOK3. Interacts directly with AKTIP/FTS, HOOK2 and HOOK3. Associates with several subunits of the homotypic vesicular sorting complex (the HOPS complex) including VPS16, VPS18, VPS39 and VPS41; these interactions may be indirect. Interacts with CCDC181. Interacts (via coiled-coil region) with RIMBP3 (via C-terminus). Interacts with LRGUK (via guanylate kinase-like domain). Interacts with microtubules. May interact with CLN3. Interacts with AP4M1; the interaction is direct, mediates the interaction between FTS-Hook-FHIP (FHF) complex and AP-4 and the perinuclear distribution of AP-4.

It is found in the cytoplasm. The protein localises to the cytoskeleton. Component of the FTS/Hook/FHIP complex (FHF complex). The FHF complex may function to promote vesicle trafficking and/or fusion via the homotypic vesicular protein sorting complex (the HOPS complex). FHF complex promotes the distribution of AP-4 complex to the perinuclear area of the cell. Required for spermatid differentiation. Probably involved in the positioning of the microtubules of the manchette and the flagellum in relation to the membrane skeleton. The chain is Protein Hook homolog 1 from Homo sapiens (Human).